Reading from the N-terminus, the 594-residue chain is UvrABC system protein C (594 aa).

Residues 13-99 (NGSGVYQYFD…IKQLKPKYNI (87 aa)) form the GIY-YIG domain. Residues 205–240 (DKLIKELQLKMDRLSSNLRFEEALIYRDRISKIQKI) enclose the UVR domain.

Belongs to the UvrC family. As to quaternary structure, interacts with UvrB in an incision complex.

Its subcellular location is the cytoplasm. Functionally, the UvrABC repair system catalyzes the recognition and processing of DNA lesions. UvrC both incises the 5' and 3' sides of the lesion. The N-terminal half is responsible for the 3' incision and the C-terminal half is responsible for the 5' incision. The chain is UvrABC system protein C from Helicobacter acinonychis (strain Sheeba).